Here is a 1342-residue protein sequence, read N- to C-terminus: DNA-directed RNA polymerase subunit beta (1342 aa).

Belongs to the RNA polymerase beta chain family. As to quaternary structure, the RNAP catalytic core consists of 2 alpha, 1 beta, 1 beta' and 1 omega subunit. When a sigma factor is associated with the core the holoenzyme is formed, which can initiate transcription.

It carries out the reaction RNA(n) + a ribonucleoside 5'-triphosphate = RNA(n+1) + diphosphate. Its function is as follows. DNA-dependent RNA polymerase catalyzes the transcription of DNA into RNA using the four ribonucleoside triphosphates as substrates. This Pectobacterium atrosepticum (strain SCRI 1043 / ATCC BAA-672) (Erwinia carotovora subsp. atroseptica) protein is DNA-directed RNA polymerase subunit beta.